A 915-amino-acid chain; its full sequence is Clathrin coat assembly protein AP180 (915 aa).

The 132-residue stretch at 14 to 145 (QYSVTGSAVA…FSYRQMAFDF (132 aa)) folds into the ENTH domain. Disordered regions lie at residues 285–326 (LEGK…DTSP), 391–425 (SVPS…ATTA), and 497–522 (PETS…PSPA). Phosphoserine occurs at positions 296, 300, and 306. The span at 302–324 (LSKSSPATTVTSPNSTPAKTIDT) shows a compositional bias: polar residues. O-linked (GlcNAc) threonine glycosylation is present at threonine 310. Position 313 is a phosphoserine (serine 313). Threonine 317 is subject to Phosphothreonine. Low complexity-rich tracts occupy residues 410-425 (TTTT…ATTA) and 500-511 (SAPVVTPTASTA). The span at 512–522 (PPVPATAPSPA) shows a compositional bias: pro residues. Residues serine 594, serine 600, proline 627, serine 640, and serine 646 each carry the phosphoserine modification. Residues 720 to 735 (TTPSTSSSSSFDPSGD) are compositionally biased toward low complexity. A disordered region spans residues 720–765 (TTPSTSSSSSFDPSGDLLMPTMAPSGQPAPVSMVPPSPAMSASKGL). Residue serine 775 is modified to Phosphoserine. The segment at 817-855 (SAGVPPQGTVPPTSSVPPGAGAPSVGQPGAGYGMPPAGT) is disordered. The residue at position 873 (arginine 873) is an Asymmetric dimethylarginine; alternate. Arginine 873 is subject to Omega-N-methylarginine; alternate. A disordered region spans residues 875 to 915 (PFGAAAVPGTQLSPSPTPATQSPKKPPAKDPLADLNIKDFL). Residues 884 to 896 (TQLSPSPTPATQS) are compositionally biased toward polar residues. Over residues 901–915 (PAKDPLADLNIKDFL) the composition is skewed to basic and acidic residues.

It belongs to the PICALM/SNAP91 family. Binds AP2A2. Interacts with AP2B1; clathrin competes with SNAP91. Post-translationally, thr-310 can be modified by the addition of N-acetylglucosamine which can be further phosphorylated. The form with phosphorylated O-linked N-acetylglucosamine is predominant in brain synaptosomes. There is no evidence for direct Thr-310 phosphorylation.

The protein localises to the cell membrane. It is found in the membrane. It localises to the coated pit. Functionally, adaptins are components of the adapter complexes which link clathrin to receptors in coated vesicles. Clathrin-associated protein complexes are believed to interact with the cytoplasmic tails of membrane proteins, leading to their selection and concentration. Binding of AP180 to clathrin triskelia induces their assembly into 60-70 nm coats. This Rattus norvegicus (Rat) protein is Clathrin coat assembly protein AP180 (Snap91).